Reading from the N-terminus, the 829-residue chain is Periplasmic nitrate reductase (829 aa).

The first 30 residues, 1 to 30, serve as a signal peptide directing secretion; sequence MNSPRPTPPPFAAAAAGLPILVRASNLVTE. In terms of domain architecture, 4Fe-4S Mo/W bis-MGD-type spans 36 to 92; that stretch reads LVWNKAPCRFCGTGCSVMVATRDGQVVATHGDIKAEVNRGINCVKGYFLSKIMYGSD. Positions 43, 46, 50, and 78 each coordinate [4Fe-4S] cluster. Residues K80, Q147, N172, C176, 209-216, 240-244, 259-261, M370, Q374, N480, 506-507, K529, D556, and 716-725 each bind Mo-bis(molybdopterin guanine dinucleotide); these read WGSNMAEM, STFEH, QTD, SD, and TGRVLEHWHT. F792 provides a ligand contact to substrate. 2 residues coordinate Mo-bis(molybdopterin guanine dinucleotide): N800 and K817.

This sequence belongs to the prokaryotic molybdopterin-containing oxidoreductase family. NasA/NapA/NarB subfamily. As to quaternary structure, component of the periplasmic nitrate reductase NapAB complex composed of NapA and NapB. [4Fe-4S] cluster is required as a cofactor. Mo-bis(molybdopterin guanine dinucleotide) serves as cofactor.

The protein localises to the periplasm. It carries out the reaction 2 Fe(II)-[cytochrome] + nitrate + 2 H(+) = 2 Fe(III)-[cytochrome] + nitrite + H2O. Catalytic subunit of the periplasmic nitrate reductase complex NapAB. Receives electrons from NapB and catalyzes the reduction of nitrate to nitrite. The protein is Periplasmic nitrate reductase of Pseudomonas aeruginosa (strain ATCC 15692 / DSM 22644 / CIP 104116 / JCM 14847 / LMG 12228 / 1C / PRS 101 / PAO1).